Here is a 314-residue protein sequence, read N- to C-terminus: Probable manganese-dependent inorganic pyrophosphatase (314 aa).

The Mn(2+) site is built by His7, Asp11, Asp13, Asp72, His94, and Asp146.

Belongs to the PPase class C family. The cofactor is Mn(2+).

It localises to the cytoplasm. It catalyses the reaction diphosphate + H2O = 2 phosphate + H(+). This Deinococcus radiodurans (strain ATCC 13939 / DSM 20539 / JCM 16871 / CCUG 27074 / LMG 4051 / NBRC 15346 / NCIMB 9279 / VKM B-1422 / R1) protein is Probable manganese-dependent inorganic pyrophosphatase (ppaC).